The chain runs to 422 residues: Testin (422 aa).

The 108-residue stretch at 92 to 199 folds into the PET domain; it reads MILTNPVPAK…GDVKLPGELE (108 aa). A disordered region spans residues 198–224; it reads LETKATDKNNVNSGDRSTSAAVGAMED. The span at 205-217 shows a compositional bias: polar residues; that stretch reads KNNVNSGDRSTSA. 3 consecutive LIM zinc-binding domains span residues 234 to 297, 299 to 359, and 362 to 422; these read YSCY…CDSE, PRCA…KHAA, and QGCH…KMMS.

This sequence belongs to the prickle / espinas / testin family.

The protein resides in the cytoplasm. The protein localises to the cell junction. Its subcellular location is the focal adhesion. In terms of biological role, scaffold protein that may play a role in cell adhesion, cell spreading and in the reorganization of the actin cytoskeleton. May play a role in the regulation of cell proliferation. May inhibit cell growth. In Gallus gallus (Chicken), this protein is Testin (TES).